Reading from the N-terminus, the 285-residue chain is Acetylglutamate kinase (285 aa).

Substrate contacts are provided by residues 69–70 (GG), arginine 91, and asparagine 183.

This sequence belongs to the acetylglutamate kinase family. ArgB subfamily.

It is found in the cytoplasm. It carries out the reaction N-acetyl-L-glutamate + ATP = N-acetyl-L-glutamyl 5-phosphate + ADP. It participates in amino-acid biosynthesis; L-arginine biosynthesis; N(2)-acetyl-L-ornithine from L-glutamate: step 2/4. Catalyzes the ATP-dependent phosphorylation of N-acetyl-L-glutamate. In Jannaschia sp. (strain CCS1), this protein is Acetylglutamate kinase.